The chain runs to 161 residues: Trivalent organoarsenical cleaving enzyme (161 aa).

In terms of domain architecture, VOC spans Lys2–Thr119. Residues His5 and His62 each contribute to the Fe(2+) site. Roxarsone (III)-binding residues include Cys96 and Cys97. Residue Glu115 coordinates Fe(2+).

The cofactor is Fe(2+).

It carries out the reaction methylarsonous acid + AH2 + O2 = arsenite + methanol + A + H(+). It catalyses the reaction roxarsone (III) + AH2 + O2 = 4-hydroxy-3-nitrocyclohexa-2,5-dien-1-one + arsenite + A + H(+). The catalysed reaction is nitarsone (III) + AH2 + O2 = 4-nitrocyclohexa-2,5-dien-1-one + arsenite + A + H(+). The enzyme catalyses 4-aminophenylarsonous acid + AH2 + O2 = 4-aminocyclohexa-2,5-dien-1-one + arsenite + A. Inhibited in vitro by reagents that chemically modify histidine residues (diethylpyrocarbonate (DEPC)), aspartate or glutamate residues (1-ethyl-3-(3-(dimethylamino)propyl) carbodiimide (EDC)), or cysteine residues (N-ethylmaleimide (NEM) or iodoacetamide (IAA)). In terms of biological role, nonheme iron-dependent dioxygenase that can break carbon-arsenic bonds, playing a role in the detoxification of environmental organoarsenical compounds. Catalyzes the oxygen-dependent demethylation of highly toxic methylarsonous acid (MAs(III)) to arsenite, which can then be exported out of the cell. Can also cleave the C-As bond in several trivalent aromatic arsenicals, including roxarsone (III), nitarsone (III) and (4-aminophenyl)arsonous acid. Organoarsenical degradation by this enzyme is proposed to have a significant impact on the arsenic biogeocycle that maintains a balance between organic and inorganic species. The protein is Trivalent organoarsenical cleaving enzyme of Bacillus sp. (strain MD1).